A 660-amino-acid polypeptide reads, in one-letter code: tRNA 5-methylaminomethyl-2-thiouridine biosynthesis bifunctional protein MnmC (660 aa).

The tract at residues 1–242 (MTDRIVPATL…KRAMLVGEFA (242 aa)) is tRNA (mnm(5)s(2)U34)-methyltransferase. The FAD-dependent cmnm(5)s(2)U34 oxidoreductase stretch occupies residues 266-660 (IGAGLAGCAV…VRALRHGRVA (395 aa)).

The protein in the N-terminal section; belongs to the methyltransferase superfamily. tRNA (mnm(5)s(2)U34)-methyltransferase family. This sequence in the C-terminal section; belongs to the DAO family. FAD serves as cofactor.

The protein localises to the cytoplasm. It carries out the reaction 5-aminomethyl-2-thiouridine(34) in tRNA + S-adenosyl-L-methionine = 5-methylaminomethyl-2-thiouridine(34) in tRNA + S-adenosyl-L-homocysteine + H(+). In terms of biological role, catalyzes the last two steps in the biosynthesis of 5-methylaminomethyl-2-thiouridine (mnm(5)s(2)U) at the wobble position (U34) in tRNA. Catalyzes the FAD-dependent demodification of cmnm(5)s(2)U34 to nm(5)s(2)U34, followed by the transfer of a methyl group from S-adenosyl-L-methionine to nm(5)s(2)U34, to form mnm(5)s(2)U34. In Burkholderia pseudomallei (strain K96243), this protein is tRNA 5-methylaminomethyl-2-thiouridine biosynthesis bifunctional protein MnmC.